The sequence spans 91 residues: DNA-binding protein HU (91 aa).

This sequence belongs to the bacterial histone-like protein family.

Histone-like DNA-binding protein which is capable of wrapping DNA to stabilize it, and thus to prevent its denaturation under extreme environmental conditions. In Clostridium pasteurianum, this protein is DNA-binding protein HU (hup).